Here is a 222-residue protein sequence, read N- to C-terminus: Apoptosis regulator OPG045 (222 aa).

Belongs to the orthopoxvirus OPG045 family. In terms of assembly, homodimer. Interacts with host pro-apoptotic protein BCL2L11 (via BH3 domain). Interacts with host NLRP1. Interacts with host BAK.

Its subcellular location is the host mitochondrion outer membrane. It localises to the host cytoplasm. Its function is as follows. Plays a role in evading host innate immune response by inhibiting host inflammasome activation. Interacts with and inhibits NLR-mediated interleukin-1 beta/IL1B production in infected cells. At the host mitochondria outer membrane, interacts with the BH3 domain of host BAK and prevents BAK from binding active BAX. In turn, host apoptosis is inhibited. This chain is Apoptosis regulator OPG045 (OPG045), found in Homo sapiens (Human).